A 347-amino-acid chain; its full sequence is Syntaxin-32 (347 aa).

At Met1–Arg325 the chain is on the cytoplasmic side. Disordered stretches follow at residues His172 to Phe191 and Pro208 to Val251. Composition is skewed to polar residues over residues Gln177–Phe191 and Asn213–Leu222. Over residues Gln237 to Gln249 the composition is skewed to low complexity. The region spanning Asp255–Tyr317 is the t-SNARE coiled-coil homology domain. A helical; Anchor for type IV membrane protein transmembrane segment spans residues Trp326–Val346. A topological domain (vesicular) is located at residue Ala347.

It belongs to the syntaxin family. As to quaternary structure, part of the t-SNARE complex.

The protein localises to the golgi apparatus. It is found in the cis-Golgi network membrane. Its function is as follows. Vesicle trafficking protein that functions in the secretory pathway. The polypeptide is Syntaxin-32 (SYP32) (Arabidopsis thaliana (Mouse-ear cress)).